We begin with the raw amino-acid sequence, 505 residues long: 2,3-bisphosphoglycerate-independent phosphoglycerate mutase (505 aa).

Mn(2+)-binding residues include Asp12 and Ser62. The active-site Phosphoserine intermediate is the Ser62. Substrate contacts are provided by residues His123, 153–154, Arg185, Arg191, 257–260, and Lys330; these read RD and RPDR. Asp397, His401, Asp438, His439, and His456 together coordinate Mn(2+).

The protein belongs to the BPG-independent phosphoglycerate mutase family. Monomer. The cofactor is Mn(2+).

The enzyme catalyses (2R)-2-phosphoglycerate = (2R)-3-phosphoglycerate. It participates in carbohydrate degradation; glycolysis; pyruvate from D-glyceraldehyde 3-phosphate: step 3/5. Its function is as follows. Catalyzes the interconversion of 2-phosphoglycerate and 3-phosphoglycerate. The protein is 2,3-bisphosphoglycerate-independent phosphoglycerate mutase of Staphylococcus saprophyticus subsp. saprophyticus (strain ATCC 15305 / DSM 20229 / NCIMB 8711 / NCTC 7292 / S-41).